The sequence spans 269 residues: Shikimate dehydrogenase (NADP(+)) (269 aa).

Shikimate is bound by residues 14 to 16 and Thr61; that span reads SLS. Lys65 acts as the Proton acceptor in catalysis. Glu76 contributes to the NADP(+) binding site. Residues Asn85 and Asp99 each coordinate shikimate. NADP(+) contacts are provided by residues 123–127, 146–151, and Ile209; these read GAGGA and NRTPER. A shikimate-binding site is contributed by Tyr211. Gly231 lines the NADP(+) pocket.

The protein belongs to the shikimate dehydrogenase family. In terms of assembly, homodimer.

It catalyses the reaction shikimate + NADP(+) = 3-dehydroshikimate + NADPH + H(+). The protein operates within metabolic intermediate biosynthesis; chorismate biosynthesis; chorismate from D-erythrose 4-phosphate and phosphoenolpyruvate: step 4/7. Involved in the biosynthesis of the chorismate, which leads to the biosynthesis of aromatic amino acids. Catalyzes the reversible NADPH linked reduction of 3-dehydroshikimate (DHSA) to yield shikimate (SA). The polypeptide is Shikimate dehydrogenase (NADP(+)) (Methanothrix thermoacetophila (strain DSM 6194 / JCM 14653 / NBRC 101360 / PT) (Methanosaeta thermophila)).